A 141-amino-acid polypeptide reads, in one-letter code: Protein GAT3 (141 aa).

Residues 72–98 form a GATA-type zinc finger; that stretch reads CPQCAVIKTSPQWREGPDGEVTLCNAC.

This is Protein GAT3 (GAT3) from Saccharomyces cerevisiae (strain ATCC 204508 / S288c) (Baker's yeast).